The sequence spans 493 residues: MDFDEVLEKYDPVMGLEVHVELGTETKMFSASSAHFGAEPNSNVDPVSLGLPGALPVVNAKGVEWAIKIGLALNCSIAESSRFARKNYFYPDQPKNYQISQYDEPIAYDGYLDVVLEDGTEWRVEIERAHMEEDTGKLTHLGGTSGRIHGATASLVDCNRAGVPLIEVVTKPIEGAGARAPEIAKAYVSALRDLVKALGVSDGRLDQGSMRVDANLSLRPIGQEEFGTRTETKNINSLKSVEQAITFEMQRQAQVLDDGGVIDQETRHYQEADGSTSKGRPKETAEDYRYFNDPDLPPVIAPREWVEEIRATLPELPWVRRARIQEEWKLSDAEMRDLINANALDLIIETVEAGTTPDEARAWWVSYISQKANESGVELDALGVAPAHVARVVALVSEGKLTNKLARQAIDGVIAGEGDVDAVVAARGLEVVRDDGAIEKAVDDALAANPDIVEKYRAGNTKVTGAIVGAVMKATRGKADPAQVNQLIAKKLA.

Residues 268 to 291 (HYQEADGSTSKGRPKETAEDYRYF) form a disordered region. The segment covering 280-291 (RPKETAEDYRYF) has biased composition (basic and acidic residues).

This sequence belongs to the GatB/GatE family. GatB subfamily. As to quaternary structure, heterotrimer of A, B and C subunits.

It carries out the reaction L-glutamyl-tRNA(Gln) + L-glutamine + ATP + H2O = L-glutaminyl-tRNA(Gln) + L-glutamate + ADP + phosphate + H(+). The enzyme catalyses L-aspartyl-tRNA(Asn) + L-glutamine + ATP + H2O = L-asparaginyl-tRNA(Asn) + L-glutamate + ADP + phosphate + 2 H(+). Allows the formation of correctly charged Asn-tRNA(Asn) or Gln-tRNA(Gln) through the transamidation of misacylated Asp-tRNA(Asn) or Glu-tRNA(Gln) in organisms which lack either or both of asparaginyl-tRNA or glutaminyl-tRNA synthetases. The reaction takes place in the presence of glutamine and ATP through an activated phospho-Asp-tRNA(Asn) or phospho-Glu-tRNA(Gln). The sequence is that of Aspartyl/glutamyl-tRNA(Asn/Gln) amidotransferase subunit B from Corynebacterium glutamicum (strain ATCC 13032 / DSM 20300 / JCM 1318 / BCRC 11384 / CCUG 27702 / LMG 3730 / NBRC 12168 / NCIMB 10025 / NRRL B-2784 / 534).